A 123-amino-acid chain; its full sequence is Small ribosomal subunit protein uS12cz/uS12cy (123 aa).

The protein belongs to the universal ribosomal protein uS12 family. Part of the 30S ribosomal subunit.

The protein resides in the plastid. It localises to the chloroplast. Functionally, with S4 and S5 plays an important role in translational accuracy. Located at the interface of the 30S and 50S subunits. This chain is Small ribosomal subunit protein uS12cz/uS12cy (rps12-A), found in Platanus occidentalis (Sycamore).